Consider the following 90-residue polypeptide: Small ribosomal subunit protein uS17 (90 aa).

This sequence belongs to the universal ribosomal protein uS17 family. As to quaternary structure, part of the 30S ribosomal subunit.

Its function is as follows. One of the primary rRNA binding proteins, it binds specifically to the 5'-end of 16S ribosomal RNA. The protein is Small ribosomal subunit protein uS17 of Burkholderia ambifaria (strain ATCC BAA-244 / DSM 16087 / CCUG 44356 / LMG 19182 / AMMD) (Burkholderia cepacia (strain AMMD)).